We begin with the raw amino-acid sequence, 99 residues long: Defensin-A4 (99 aa).

Positions 1–21 are cleaved as a signal peptide; sequence MKTLCLLFAVLCLVTWTQARG. A propeptide spanning residues 22-68 is cleaved from the precursor; sequence AEVEENLTAQDGEVDIAGDNGDVQLTLNTDDFESFTLKTLTLGHPRV. 3 disulfides stabilise this stretch: Cys-73–Cys-97, Cys-75–Cys-89, and Cys-79–Cys-96.

Belongs to the alpha-defensin family. Lowly expressed in spleen, and expressed at lower levels in kidney and lung.

The protein localises to the secreted. Has antimicrobial activity. In Ornithorhynchus anatinus (Duckbill platypus), this protein is Defensin-A4.